Reading from the N-terminus, the 463-residue chain is MSTAKAPTLPASIFRAYDIRGVVGDTLTAETAYWIGRAIGSESLARGEPCVAVGRDGRLSGPELVKQLIQGLVDCGCQVSDVGMVPTPVLYYAANVLEGKSGVMLTGSHNPPDYNGFKIVVAGETLANEQIQALRERIEKNDLASGVGSVEQVDILPRYFKQIRDDIAMAKPMKVVVDCGNGVAGVIAPQLIEALGCSVIPLYCEVDGNFPNHHPDPGKPENLKDLIAKVKAENADLGLAFDGDGDRVGVVTNTGTIIYPDRLLMLFAKDVVSRNPGADIIFDVKCTRRLIALISGYGGRPVMWKTGHSLIKKKMKETGALLAGEMSGHVFFKERWFGFDDGIYSAARLLEILSQDQRDSEHVFSAFPSDISTPEINITVTEDSKFAIIEALQRDAQWGEGNITTLDGVRVDYPKGWGLVRASNTTPVLVLRFEADTEEELERIKTVFRNQLKAVDSSLPVPF.

Position 17 (Tyr17) interacts with alpha-D-glucose 1-phosphate. Tyr17 provides a ligand contact to alpha-D-mannose 1-phosphate. Ser108 (non-phosphorylated intermediate) is an active-site residue. Mg(2+) contacts are provided by Ser108, Asp242, Asp244, and Asp246. The residue at position 108 (Ser108) is a Phosphoserine. Alpha-D-glucose 1-phosphate contacts are provided by residues Lys285, His308, 325-329 (EMSGH), and 421-425 (RASNT). Alpha-D-mannose 1-phosphate contacts are provided by residues His308, 325 to 329 (EMSGH), and 421 to 425 (RASNT).

It belongs to the phosphohexose mutase family. As to quaternary structure, monomer. Mg(2+) serves as cofactor.

The catalysed reaction is alpha-D-mannose 1-phosphate = D-mannose 6-phosphate. It catalyses the reaction alpha-D-glucose 1-phosphate = alpha-D-glucose 6-phosphate. It functions in the pathway nucleotide-sugar biosynthesis; GDP-alpha-D-mannose biosynthesis; alpha-D-mannose 1-phosphate from D-fructose 6-phosphate: step 2/2. The protein operates within bacterial outer membrane biogenesis; lipopolysaccharide biosynthesis. Its function is as follows. Highly reversible phosphoryltransferase. The phosphomannomutase activity produces a precursor for alginate polymerization, the alginate layer causes a mucoid phenotype and provides a protective barrier against host immune defenses and antibiotics. Also involved in core lipopolysaccaride (LPS) biosynthesis due to its phosphoglucomutase activity. Essential for rhamnolipid production, an exoproduct correlated with pathogenicity. Required for biofilm production. The reaction proceeds via 2 processive phosphoryl transferase reactions; first from enzyme-phospho-Ser-108 to the substrate (generating a bisphosphorylated substrate intermediate and a dephosphorylated enzyme), a 180 degree rotation of the intermediate (probably aided by movement of domain 4), and subsequent transfer of phosphate back to the enzyme. The chain is Phosphomannomutase/phosphoglucomutase (algC) from Pseudomonas aeruginosa (strain UCBPP-PA14).